Reading from the N-terminus, the 271-residue chain is Thiazole synthase (271 aa).

Lysine 95 (schiff-base intermediate with DXP) is an active-site residue. Residues glycine 156, 182–183 (AG), and 204–205 (NT) each bind 1-deoxy-D-xylulose 5-phosphate.

The protein belongs to the ThiG family. Homotetramer. Forms heterodimers with either ThiH or ThiS.

The protein resides in the cytoplasm. It catalyses the reaction [ThiS sulfur-carrier protein]-C-terminal-Gly-aminoethanethioate + 2-iminoacetate + 1-deoxy-D-xylulose 5-phosphate = [ThiS sulfur-carrier protein]-C-terminal Gly-Gly + 2-[(2R,5Z)-2-carboxy-4-methylthiazol-5(2H)-ylidene]ethyl phosphate + 2 H2O + H(+). The protein operates within cofactor biosynthesis; thiamine diphosphate biosynthesis. In terms of biological role, catalyzes the rearrangement of 1-deoxy-D-xylulose 5-phosphate (DXP) to produce the thiazole phosphate moiety of thiamine. Sulfur is provided by the thiocarboxylate moiety of the carrier protein ThiS. In vitro, sulfur can be provided by H(2)S. This is Thiazole synthase from Yersinia pseudotuberculosis serotype O:1b (strain IP 31758).